An 861-amino-acid chain; its full sequence is Leucine--tRNA ligase (861 aa).

A 'HIGH' region motif is present at residues 42–52 (PYPSGNLHMGH). The 'KMSKS' region signature appears at 620–624 (KMSKS). Position 623 (lysine 623) interacts with ATP.

Belongs to the class-I aminoacyl-tRNA synthetase family.

It localises to the cytoplasm. It catalyses the reaction tRNA(Leu) + L-leucine + ATP = L-leucyl-tRNA(Leu) + AMP + diphosphate. The sequence is that of Leucine--tRNA ligase from Baumannia cicadellinicola subsp. Homalodisca coagulata.